A 225-amino-acid polypeptide reads, in one-letter code: Ribonuclease 3 (225 aa).

The RNase III domain maps to 4 to 133 (FEKLETLLGY…LIAAIYLDSN (130 aa)). Position 46 (E46) interacts with Mg(2+). The active site involves D50. Residues N119 and E122 each coordinate Mg(2+). The active site involves E122. The 68-residue stretch at 158–225 (DPKTALQEWA…AARSLLHRLK (68 aa)) folds into the DRBM domain.

It belongs to the ribonuclease III family. Homodimer. Requires Mg(2+) as cofactor.

The protein resides in the cytoplasm. It carries out the reaction Endonucleolytic cleavage to 5'-phosphomonoester.. Its function is as follows. Digests double-stranded RNA. Involved in the processing of primary rRNA transcript to yield the immediate precursors to the large and small rRNAs (23S and 16S). Processes some mRNAs, and tRNAs when they are encoded in the rRNA operon. Processes pre-crRNA and tracrRNA of type II CRISPR loci if present in the organism. In Rickettsia prowazekii (strain Madrid E), this protein is Ribonuclease 3.